A 635-amino-acid chain; its full sequence is MPVIRLPDGSERKFDGPVTVAEVAMNIGAGLARAALGGKVNGKAVDTSYLITDDADLSIITDRDAEGLAIIRHSTAHLLAQAVKQLFPDAQVTIGPVIENGFYYDFSYKRPFTPEDLQKIEARMQELAKRDIPIVRTVMERDEAVAYFQSIGEQYKAEIIGSIPADQEISLYTQDDFTDLCRGTHVPSTGKLKAFKLMKVAGAYWRGDSNNEMLQRIYGTAWAKKEDLDAYLHMLEEAEKRDHRKLGRQLDFFHMQDEAPGMVFWHPRGWVIWQEVEQYMRNMFREFGYQEVRTPTIMDRVMWEKSGHWQNYHDNMFTTASENRDYAVKPMNCPGHIQIFNSTLHSYRDLPLRLAEFGSCHRNEPSGALHGLMRVRGFTQDDAHIFCTEDQVKDEVADFIVMLYKAYKDFGFNEVLVKLSTRPEKRVGTDEAWDKAEEALAVALRQNNLDFELQPGEGAFYGPKIEFTLKDSLGRLWQCGTIQLDFNLPERLGAEYVDEDNSRKHPVMLHRAIVGSMERFLGILIENYAGAMPAWLAPVQAMVLNISDGQADYVSSVVAELRKNGFRVDSDLRNEKITYKIREHSLQKLPYLLIAGEREMQTGQVAVRTRKGEDLGSMPLSAFIERLKSDVADKV.

The TGS domain occupies M1–T61. Residues D242–P533 form a catalytic region. Zn(2+) is bound by residues C333, H384, and H510.

This sequence belongs to the class-II aminoacyl-tRNA synthetase family. As to quaternary structure, homodimer. Zn(2+) serves as cofactor.

The protein resides in the cytoplasm. It carries out the reaction tRNA(Thr) + L-threonine + ATP = L-threonyl-tRNA(Thr) + AMP + diphosphate + H(+). Functionally, catalyzes the attachment of threonine to tRNA(Thr) in a two-step reaction: L-threonine is first activated by ATP to form Thr-AMP and then transferred to the acceptor end of tRNA(Thr). Also edits incorrectly charged L-seryl-tRNA(Thr). This chain is Threonine--tRNA ligase, found in Methylobacillus flagellatus (strain ATCC 51484 / DSM 6875 / VKM B-1610 / KT).